The chain runs to 276 residues: Vitamin B12-binding protein (276 aa).

The N-terminal stretch at 1–20 (MIVRFLCWLTGLLLCTAAYA) is a signal peptide. A Fe/B12 periplasmic-binding domain is found at 24-273 (RVISLAPHAT…QLTALSPGSS (250 aa)). The cysteines at positions 186 and 262 are disulfide-linked.

It belongs to the BtuF family. The complex is composed of two ATP-binding proteins (BtuD), two transmembrane proteins (BtuC) and a solute-binding protein (BtuF).

The protein resides in the periplasm. In terms of biological role, part of the ABC transporter complex BtuCDF involved in vitamin B12 import. Binds vitamin B12 and delivers it to the periplasmic surface of BtuC. The protein is Vitamin B12-binding protein of Pectobacterium carotovorum subsp. carotovorum (strain PC1).